Here is a 591-residue protein sequence, read N- to C-terminus: Paxillin (591 aa).

The residue at position 1 (methionine 1) is an N-acetylmethionine. The LD motif 1 signature appears at 3 to 15 (DLDALLADLESTT). The segment at 17–138 (HISKRPVFLS…SSPTVMSTSL (122 aa)) is disordered. At tyrosine 31 the chain carries Phosphotyrosine; by PTK6. Pro residues predominate over residues 45-54 (VPPPVPPPPS). Residues 69–101 (WQPSGSRFIHQQPQSSSPVYGSSAKTSSVSNPQ) show a composition bias toward polar residues. A phosphoserine mark is found at serine 83 and serine 85. Tyrosine 88 is subject to Phosphotyrosine. Serine 106 is modified (phosphoserine). The residue at position 118 (tyrosine 118) is a Phosphotyrosine; by PTK6. Residues serine 119, serine 126, and serine 130 each carry the phosphoserine modification. Over residues 121 to 137 (PNKQKSAESSPTVMSTS) the composition is skewed to polar residues. Position 132 is a phosphothreonine (threonine 132). A phosphoserine mark is found at serine 137, serine 140, and serine 143. An LD motif 2 motif is present at residues 144 to 156 (ELDRLLLELNAVQ). The tract at residues 156-213 (QHNPPGFPADEANSGPPLPGALSPHYGVPETNSPLGGKAGPLTKEKPKRNGGRGLEDV) is disordered. The residue at position 181 (tyrosine 181) is a Phosphotyrosine. The LD motif 3 motif lies at 216-228 (SVESLLDELESSV). A Phosphoserine modification is found at serine 230. A disordered region spans residues 237 to 260 (VNQGEMSSPQRVTSTQQQTRISAS). Serine 244 is subject to Phosphoserine; by CDK5. 4 positions are modified to phosphoserine: serine 250, serine 258, serine 261, and serine 272. An LD motif 4 motif is present at residues 265–276 (ELDELMASLSDF). Basic and acidic residues predominate over residues 289–300 (RCWAADWPRDGG). Positions 289 to 335 (RCWAADWPRDGGRSSPGGQDEGGFMAQGKTGSSSPPGGPPKPGSQLD) are disordered. 4 positions are modified to phosphoserine: serine 303, serine 322, serine 332, and serine 340. The LD motif 5 motif lies at 333 to 345 (QLDSMLGSLQSDL). 4 LIM zinc-binding domains span residues 356 to 415 (GVCG…LFSP), 416 to 473 (RCYY…DMFA), 474 to 533 (PKCG…RRGS), and 534 to 591 (LCSG…KLFC). A Phosphoserine modification is found at serine 533.

It belongs to the paxillin family. In terms of assembly, binds to vinculin and to the SH3 domain of SRC. Interacts with GIT1, NUDT16L1/SDOS, PARVA, PARVB, SORBS1 and TGFB1I1. Component of cytoplasmic complexes, which also contain GIT1, ARHGEF6 and PAK1. Binds ASAP2. Interacts with RNF5 and PDCD10. Interacts with NEK3 and this interaction is prolactin-dependent. Interacts with PTK2/FAK1 and PTK2B/PYK2. Interacts with PTK6. Interacts with CD36. Interacts (via cytoplasmic domain) with CEACAM1; the interaction is phosphotyrosyl-dependent. Interacts with PXN; this complex stabilizes actin dynamics. Interacts with TRIM15. Interacts with PAK4; PAK4 acts as a scaffold to suppport PAXI phosphorylation at Ser-272. Phosphorylated by MAPK1/ERK2. Phosphorylated on tyrosine residues during integrin-mediated cell adhesion, embryonic development, fibroblast transformation and following stimulation of cells by mitogens. Phosphorylation at Ser-244 by CDK5 reduces its interaction with PTK2/FAK1 in matrix-cell focal adhesions (MCFA) during oligodendrocytes (OLs) differentiation. Phosphorylation at Tyr-31 and Tyr-118 by PTK6 promote the activation of RAC1 via CRK/CrKII, thereby promoting migration and invasion. Phosphorylation at Ser-250 by SLK is required for PXN redistribution and cell motility. Phosphorylation at Ser-272 promotes focal adhesion disassembly during cell migration.

It is found in the cytoplasm. It localises to the cytoskeleton. Its subcellular location is the cell junction. The protein resides in the focal adhesion. The protein localises to the cell cortex. Cytoskeletal protein involved in actin-membrane attachment at sites of cell adhesion to the extracellular matrix (focal adhesion). Recruits other proteins such as TRIM15 to focal adhesion. This is Paxillin (PXN) from Pongo abelii (Sumatran orangutan).